Here is a 370-residue protein sequence, read N- to C-terminus: Phosphate-binding protein PstS 2 (370 aa).

The N-terminal stretch at 1–22 (MKFARSGAAVSLLAAGTLVLTA) is a signal peptide. C23 carries N-palmitoyl cysteine lipidation. C23 is lipidated: S-diacylglycerol cysteine. Residues 54–56 (STA), S84, D102, and 191–193 (SGT) each bind phosphate.

It belongs to the PstS family. The complex is composed of two ATP-binding proteins (PstB), two transmembrane proteins (PstC and PstA) and a solute-binding protein (PstS).

The protein localises to the cell membrane. In terms of biological role, functions in inorganic phosphate uptake, although probably not the main uptake protein under phosphate starvation. Part of the ABC transporter complex PstSACB involved in phosphate import. The polypeptide is Phosphate-binding protein PstS 2 (pstS2) (Mycobacterium tuberculosis (strain ATCC 25618 / H37Rv)).